Here is a 391-residue protein sequence, read N- to C-terminus: F-box/kelch-repeat protein At4g05080 (391 aa).

One can recognise an F-box domain in the interval 2-49 (TMMFDLTQDLVKEILSRVPITSLGAVRSTCKGWNALSKDRILCKAKPK). Kelch repeat units lie at residues 100–143 (HMYY…TFCL) and 144–194 (RYDN…SASV). Positions 369 to 385 (RRRRERNSKRKEKKRKG) are enriched in basic residues. Positions 369–391 (RRRRERNSKRKEKKRKGTTNNKV) are disordered.

In Arabidopsis thaliana (Mouse-ear cress), this protein is F-box/kelch-repeat protein At4g05080.